The primary structure comprises 90 residues: Probable Fe(2+)-trafficking protein (90 aa).

The protein belongs to the Fe(2+)-trafficking protein family.

Its function is as follows. Could be a mediator in iron transactions between iron acquisition and iron-requiring processes, such as synthesis and/or repair of Fe-S clusters in biosynthetic enzymes. In Acinetobacter baylyi (strain ATCC 33305 / BD413 / ADP1), this protein is Probable Fe(2+)-trafficking protein.